We begin with the raw amino-acid sequence, 505 residues long: Glycerol kinase 1 (505 aa).

ADP is bound at residue Thr-13. Residues Thr-13, Thr-14, and Ser-15 each contribute to the ATP site. Thr-13 serves as a coordination point for sn-glycerol 3-phosphate. An ADP-binding site is contributed by Arg-17. 3 residues coordinate sn-glycerol 3-phosphate: Arg-83, Glu-84, and Tyr-135. Residues Arg-83, Glu-84, and Tyr-135 each coordinate glycerol. Phosphohistidine; by HPr is present on His-231. Asp-245 is a binding site for sn-glycerol 3-phosphate. The glycerol site is built by Asp-245 and Gln-246. Residues Thr-267 and Gly-310 each coordinate ADP. ATP-binding residues include Thr-267, Gly-310, Gln-314, and Gly-411. Gly-411 and Asn-415 together coordinate ADP.

Belongs to the FGGY kinase family. In terms of assembly, homotetramer and homodimer (in equilibrium). The phosphoenolpyruvate-dependent sugar phosphotransferase system (PTS), including enzyme I, and histidine-containing protein (HPr) are required for the phosphorylation, which leads to the activation of the enzyme.

The enzyme catalyses glycerol + ATP = sn-glycerol 3-phosphate + ADP + H(+). The protein operates within polyol metabolism; glycerol degradation via glycerol kinase pathway; sn-glycerol 3-phosphate from glycerol: step 1/1. Activated by phosphorylation and inhibited by fructose 1,6-bisphosphate (FBP). In terms of biological role, key enzyme in the regulation of glycerol uptake and metabolism. Catalyzes the phosphorylation of glycerol to yield sn-glycerol 3-phosphate. This Lactiplantibacillus plantarum (strain ATCC BAA-793 / NCIMB 8826 / WCFS1) (Lactobacillus plantarum) protein is Glycerol kinase 1.